The sequence spans 120 residues: uncharacterized protein (120 aa).

It is found in the virion. This is an uncharacterized protein from Acanthamoeba polyphaga mimivirus (APMV).